The sequence spans 162 residues: UPF0763 protein Sdel_0383 (162 aa).

It belongs to the UPF0763 family.

In Sulfurospirillum deleyianum (strain ATCC 51133 / DSM 6946 / 5175), this protein is UPF0763 protein Sdel_0383.